The chain runs to 219 residues: ATP-dependent Clp protease proteolytic subunit 4 (219 aa).

The Nucleophile role is filled by Ser-125. His-150 is a catalytic residue.

Belongs to the peptidase S14 family. As to quaternary structure, fourteen ClpP subunits assemble into 2 heptameric rings which stack back to back to give a disk-like structure with a central cavity, resembling the structure of eukaryotic proteasomes.

The protein resides in the cytoplasm. The enzyme catalyses Hydrolysis of proteins to small peptides in the presence of ATP and magnesium. alpha-casein is the usual test substrate. In the absence of ATP, only oligopeptides shorter than five residues are hydrolyzed (such as succinyl-Leu-Tyr-|-NHMec, and Leu-Tyr-Leu-|-Tyr-Trp, in which cleavage of the -Tyr-|-Leu- and -Tyr-|-Trp bonds also occurs).. Cleaves peptides in various proteins in a process that requires ATP hydrolysis. Has a chymotrypsin-like activity. Plays a major role in the degradation of misfolded proteins. This is ATP-dependent Clp protease proteolytic subunit 4 from Prochlorococcus marinus (strain MIT 9312).